A 98-amino-acid polypeptide reads, in one-letter code: Plastocyanin (98 aa).

The region spanning Ala1–Gln98 is the Plastocyanin-like domain. The Cu cation site is built by His38, Cys83, His86, and Met91.

The protein belongs to the plastocyanin family. Requires Cu(2+) as cofactor.

It localises to the plastid. The protein resides in the chloroplast thylakoid membrane. Its function is as follows. Participates in electron transfer between P700 and the cytochrome b6-f complex in photosystem I. This chain is Plastocyanin (PETE), found in Ulva arasakii (Sea lettuce).